The chain runs to 471 residues: Probable lysophospholipase BODYGUARD 2 (471 aa).

The first 45 residues, 1-45 (MGIARWLNRTVGFFVFALLDIADFLLCYTYKTLDYFLESERKPCY), serve as a signal peptide directing secretion. Cys46 carries N-palmitoyl cysteine lipidation. The AB hydrolase-1 domain maps to 193 to 296 (VVFIHGFVSS…AIKSLTLLAP (104 aa)). Residue His197 is part of the active site. Ser271 acts as the Nucleophile in catalysis. Catalysis depends on charge relay system residues Asp418 and His446.

The protein localises to the cell membrane. Its subcellular location is the secreted. It is found in the cell wall. Its function is as follows. Involved in cuticle development and morphogenesis. The protein is Probable lysophospholipase BODYGUARD 2 of Arabidopsis thaliana (Mouse-ear cress).